The chain runs to 641 residues: Bifunctional protein glk (641 aa).

Positions 1-340 (MSTGAQTKAA…QLSNRTGGAS (340 aa)) are glucokinase. 23–28 (ADVGGT) serves as a coordination point for ATP. The HTH rpiR-type domain occupies 341 to 417 (SAVFERIRQM…LKLATGLTGT (77 aa)). A putative HTH-type transcriptional regulator region spans residues 341–641 (SAVFERIRQM…SHGAAPAAKD (301 aa)). A DNA-binding region (H-T-H motif) is located at residues 377–396 (IVNIARKADVSQPTVIRFCR). Positions 461 to 600 (AIDILNNARR…AVGVAIRRAA (140 aa)) constitute an SIS domain. Residues 576-596 (SMISRILHLVMIDILAVGVAI) traverse the membrane as a helical segment.

In the N-terminal section; belongs to the bacterial glucokinase family.

It is found in the membrane. The catalysed reaction is D-glucose + ATP = D-glucose 6-phosphate + ADP + H(+). The sequence is that of Bifunctional protein glk (glk) from Burkholderia mallei (strain ATCC 23344).